The sequence spans 87 residues: Sec-independent protein translocase protein TatA (87 aa).

The chain crosses the membrane as a helical span at residues 3 to 23 (GTFSWTHLLIIALLFVVLFGA). The tract at residues 47–87 (MQHETPQANAAPVQQPAQQLPPAQPAQAPAQPVNQAEQKSA) is disordered. Low complexity predominate over residues 52–87 (PQANAAPVQQPAQQLPPAQPAQAPAQPVNQAEQKSA).

This sequence belongs to the TatA/E family. The Tat system comprises two distinct complexes: a TatABC complex, containing multiple copies of TatA, TatB and TatC subunits, and a separate TatA complex, containing only TatA subunits. Substrates initially bind to the TatABC complex, which probably triggers association of the separate TatA complex to form the active translocon.

The protein resides in the cell membrane. Its function is as follows. Part of the twin-arginine translocation (Tat) system that transports large folded proteins containing a characteristic twin-arginine motif in their signal peptide across membranes. TatA could form the protein-conducting channel of the Tat system. This is Sec-independent protein translocase protein TatA from Nocardia farcinica (strain IFM 10152).